Consider the following 582-residue polypeptide: MISLITYFGVVHYNFYRRHVSLRSLYIILISMWTFSLAIAIPLGLYEAASNSQGPIKCDLSYCGKVVEWITFSIACISLAITASLTGFAVISLHWYNYKSKTNGVDVPKVTTRARIRLTWTFFALIVICLIELLPFGLVIGNDKSSLQGCDSFYNANELLVQSIISSVETLVGSLVFLTDPLINIFFDKNISKMVKLQLTLGKWFIALYRFLFQMTNIFENCSTHYSFEKNLQKCVNASNPCQLLQKMNTAHSLMIWMGFYIPSAMCFLAVLVDTYCLLVTISILKSLKKQSRKQYIFVVVRLSAAILIALCIIIIQSTYFIDIPFRDTFAFFAVLFIIYDFSILSLLGSFTGVAMMTYFGVMRPLVYRDKFTLKTIYIIAFAIVLFSVCVAIPFGLFQAADEIDGPIKCDSESCELIVKWLLFCIACLILMGCTGTLLFVTVSLHWHSYKSKKMGNVSSSAFNHGKSRLTWTTTILVILCCVELIPTGLLAAFGKSESISDDCYDFYNANSLIFPAIVSSLETFLGSITFLLDPIINFSFDKRISKVFSSQMKFLRSKVFCASSSSLSRNDKIIKDQSQIE.

The next 4 helical transmembrane spans lie at 25–45, 70–90, 120–140, and 159–179; these read LYII…PLGL, ITFS…GFAV, WTFF…GLVI, and LLVQ…VFLT. N-linked (GlcNAc...) asparagine glycosylation occurs at Asn-190. A helical membrane pass occupies residues 199 to 218; it reads LTLGKWFIALYRFLFQMTNI. 2 N-linked (GlcNAc...) asparagine glycosylation sites follow: Asn-221 and Asn-237. 5 helical membrane-spanning segments follow: residues 253–273, 296–316, 329–349, 377–397, and 421–441; these read SLMI…AVLV, YIFV…IIII, TFAF…SLLG, IYII…PFGL, and WLLF…LLFV. Asn-457 carries an N-linked (GlcNAc...) asparagine glycan. 2 helical membrane passes run 475-495 and 513-533; these read TILV…AAFG and LIFP…TFLL. Asn-538 is a glycosylation site (N-linked (GlcNAc...) asparagine).

This sequence belongs to the G-protein coupled receptor 1 family. B0244 subfamily.

It localises to the cell membrane. In Caenorhabditis elegans, this protein is Putative G-protein coupled receptor B0244.10.